Reading from the N-terminus, the 451-residue chain is Proton-coupled amino acid transporter-like protein acs (451 aa).

Residues M1–T48 are Cytoplasmic-facing. A helical membrane pass occupies residues F49–A69. Over H70–T80 the chain is Extracellular. N75 carries N-linked (GlcNAc...) asparagine glycosylation. Residues L81 to L101 form a helical membrane-spanning segment. Residues C102–P136 are Cytoplasmic-facing. Residues F137–I157 traverse the membrane as a helical segment. Over A158–E167 the chain is Extracellular. Residues Y168–I188 traverse the membrane as a helical segment. Over Y189 to P199 the chain is Cytoplasmic. The helical transmembrane segment at F200–F220 threads the bilayer. Residues E221–K237 are Extracellular-facing. The chain crosses the membrane as a helical span at residues L238–I258. Residues E259–C272 lie on the Cytoplasmic side of the membrane. Residues G273–G293 traverse the membrane as a helical segment. Over Y294–K320 the chain is Extracellular. N299 carries N-linked (GlcNAc...) asparagine glycosylation. The chain crosses the membrane as a helical span at residues V321 to I341. Residues L342–T357 are Cytoplasmic-facing. The helical transmembrane segment at F358–I378 threads the bilayer. Residues P379 to S382 lie on the Extracellular side of the membrane. The chain crosses the membrane as a helical span at residues V383–L403. The Cytoplasmic portion of the chain corresponds to L404–K420. The helical transmembrane segment at L421–V441 threads the bilayer. The Extracellular portion of the chain corresponds to S442 to K451.

It belongs to the amino acid/polyamine transporter 2 family. Expressed in the proximal and distal regions of the midgut; expressed in enterocytes and progenitor cells. Expression increases in response to intestinal bacterial infection and spreads further into the midgut, eventually covering the entire midgut.

It is found in the cell membrane. The protein localises to the late endosome membrane. It localises to the lysosome membrane. Its subcellular location is the basal cell membrane. Functionally, amino acid transporter which has pH-dependent electrogenic transport activity for alanine, glycine and proline. Plays a role in positive regulation of growth by directly or indirectly modulating the effects of the TOR signaling pathway. Required in enterocytes for the efficient recovery of gut epithelium following the cytoplasmic purge response to bacterial infection. Acts cell-autonomously to promote the retrograde transport of amino acids into the intestinal epithelium. Acts non-cell-autonomously through the insulin signaling pathway to stimulate Myc expression and the release of amino acids from nutrient stores into the hemolymph. This Drosophila melanogaster (Fruit fly) protein is Proton-coupled amino acid transporter-like protein acs.